The sequence spans 126 residues: Ribulose bisphosphate carboxylase small subunit, chloroplastic 1 (126 aa).

It belongs to the RuBisCO small chain family. Heterohexadecamer of 8 large and 8 small subunits.

It is found in the plastid. It localises to the chloroplast. Its function is as follows. RuBisCO catalyzes two reactions: the carboxylation of D-ribulose 1,5-bisphosphate, the primary event in carbon dioxide fixation, as well as the oxidative fragmentation of the pentose substrate. Both reactions occur simultaneously and in competition at the same active site. Although the small subunit is not catalytic it is essential for maximal activity. This is Ribulose bisphosphate carboxylase small subunit, chloroplastic 1 from Acetabularia peniculus (Green alga).